The following is a 203-amino-acid chain: Ribosomal RNA large subunit methyltransferase E (203 aa).

Gly-51, Trp-53, Asp-69, Asp-85, and Asp-108 together coordinate S-adenosyl-L-methionine. The active-site Proton acceptor is the Lys-148.

The protein belongs to the class I-like SAM-binding methyltransferase superfamily. RNA methyltransferase RlmE family.

The protein resides in the cytoplasm. The catalysed reaction is uridine(2552) in 23S rRNA + S-adenosyl-L-methionine = 2'-O-methyluridine(2552) in 23S rRNA + S-adenosyl-L-homocysteine + H(+). Specifically methylates the uridine in position 2552 of 23S rRNA at the 2'-O position of the ribose in the fully assembled 50S ribosomal subunit. The chain is Ribosomal RNA large subunit methyltransferase E from Methanosphaerula palustris (strain ATCC BAA-1556 / DSM 19958 / E1-9c).